The primary structure comprises 196 residues: Histone H1.0 (196 aa).

Disordered regions lie at residues 1 to 29 (MTEN…PKYS) and 78 to 196 (SGTL…GRKK). Positions 24-97 (DHPKYSDMIL…GASGSFRLAK (74 aa)) constitute an H15 domain. Residues 104–196 (PAKKPKKEIK…ASPKKSGRKK (93 aa)) show a composition bias toward basic residues.

Belongs to the histone H1/H5 family.

It is found in the nucleus. Its subcellular location is the chromosome. Its function is as follows. Histones H1 are necessary for the condensation of nucleosome chains into higher-order structures. The histones H1.0 are found in cells that are in terminal stages of differentiation or that have low rates of cell division. This Xenopus tropicalis (Western clawed frog) protein is Histone H1.0 (h1-0).